A 227-amino-acid polypeptide reads, in one-letter code: NADH-quinone oxidoreductase subunit C (227 aa).

It belongs to the complex I 30 kDa subunit family. In terms of assembly, NDH-1 is composed of 14 different subunits. Subunits NuoB, C, D, E, F, and G constitute the peripheral sector of the complex.

It localises to the cell inner membrane. It catalyses the reaction a quinone + NADH + 5 H(+)(in) = a quinol + NAD(+) + 4 H(+)(out). In terms of biological role, NDH-1 shuttles electrons from NADH, via FMN and iron-sulfur (Fe-S) centers, to quinones in the respiratory chain. The immediate electron acceptor for the enzyme in this species is believed to be ubiquinone. Couples the redox reaction to proton translocation (for every two electrons transferred, four hydrogen ions are translocated across the cytoplasmic membrane), and thus conserves the redox energy in a proton gradient. The sequence is that of NADH-quinone oxidoreductase subunit C from Coxiella burnetii (strain Dugway 5J108-111).